The sequence spans 1407 residues: Metabotropic glutamate receptor-like protein P (1407 aa).

Over Met1 to Lys696 the chain is Extracellular. N-linked (GlcNAc...) asparagine glycosylation is found at Asn43 and Asn58. PbH1 repeat units follow at residues Ile93–Gly118 and Phe129–Asn150. Asn162, Asn179, Asn182, Asn230, Asn241, Asn270, Asn368, Asn391, Asn464, Asn512, Asn539, Asn544, Asn554, Asn571, Asn627, and Asn646 each carry an N-linked (GlcNAc...) asparagine glycan. The PbH1 3 repeat unit spans residues Ile254–Thr279. The stretch at Gly452–Thr476 is one PbH1 4 repeat. The helical transmembrane segment at Phe697–Ser717 threads the bilayer. Over Leu718–Pro731 the chain is Cytoplasmic. A helical transmembrane segment spans residues Leu732–Phe752. Residues Gly753–Thr758 are Extracellular-facing. A helical transmembrane segment spans residues Cys759–Ile779. Residues Lys780 to Lys806 lie on the Cytoplasmic side of the membrane. The chain crosses the membrane as a helical span at residues Phe807–Pro827. Over Thr828–Tyr853 the chain is Extracellular. The helical transmembrane segment at Val854–Val874 threads the bilayer. Residues Cys875–Tyr890 are Cytoplasmic-facing. The chain crosses the membrane as a helical span at residues Ile891 to Val911. Residues Phe912–Asn919 lie on the Extracellular side of the membrane. The chain crosses the membrane as a helical span at residues Phe920–Ile940. The Cytoplasmic segment spans residues Pro941 to Lys1407. The span at Gln991–Gly1004 shows a compositional bias: polar residues. Disordered regions lie at residues Gln991 to Phe1072, Gly1084 to Gly1248, Lys1267 to Glu1351, and Phe1369 to Lys1407. Residues Arg1005 to Asn1029 are compositionally biased toward low complexity. Polar residues predominate over residues Met1030–Ile1040. A compositionally biased stretch (low complexity) spans Ser1041–Asn1071. Over residues Gly1084–Lys1093 the composition is skewed to basic and acidic residues. Composition is skewed to low complexity over residues Pro1099–Ile1147, Ser1154–Ser1246, and Ser1276–Asn1339. A coiled-coil region spans residues Asn1315 to Asp1344.

Belongs to the G-protein coupled receptor 3 family. GABA-B receptor subfamily.

The protein localises to the membrane. The sequence is that of Metabotropic glutamate receptor-like protein P (grlP) from Dictyostelium discoideum (Social amoeba).